The following is a 502-amino-acid chain: Carbon catabolite-derepressing protein kinase (502 aa).

The 256-residue stretch at tyrosine 14 to phenylalanine 269 folds into the Protein kinase domain. Residues leucine 20–valine 28 and lysine 43 each bind ATP. The active-site Proton acceptor is aspartate 140. Position 173 is a phosphothreonine; by autocatalysis (threonine 173). One can recognise a UBA domain in the interval methionine 290–aspartate 330. Positions asparagine 453–valine 501 constitute a KA1 domain.

It belongs to the protein kinase superfamily. CAMK Ser/Thr protein kinase family. SNF1 subfamily.

The catalysed reaction is L-seryl-[protein] + ATP = O-phospho-L-seryl-[protein] + ADP + H(+). It catalyses the reaction L-threonyl-[protein] + ATP = O-phospho-L-threonyl-[protein] + ADP + H(+). Functionally, essential for release from glucose repression. In Secale cereale (Rye), this protein is Carbon catabolite-derepressing protein kinase (RKIN1).